Reading from the N-terminus, the 534-residue chain is Phosphoenolpyruvate carboxykinase (ATP) (534 aa).

Positions 60, 195, and 201 each coordinate substrate. Residues Lys-201, His-221, and 237-245 (GLSGTGKTT) each bind ATP. Residues Lys-201 and His-221 each coordinate Mn(2+). Mn(2+) is bound at residue Asp-258. Residues Glu-287, Arg-324, and Thr-449 each coordinate ATP. Arg-324 is a substrate binding site.

Belongs to the phosphoenolpyruvate carboxykinase (ATP) family. The cofactor is Mn(2+).

It is found in the cytoplasm. The enzyme catalyses oxaloacetate + ATP = phosphoenolpyruvate + ADP + CO2. The protein operates within carbohydrate biosynthesis; gluconeogenesis. In terms of biological role, involved in the gluconeogenesis. Catalyzes the conversion of oxaloacetate (OAA) to phosphoenolpyruvate (PEP) through direct phosphoryl transfer between the nucleoside triphosphate and OAA. The protein is Phosphoenolpyruvate carboxykinase (ATP) of Flavobacterium johnsoniae (strain ATCC 17061 / DSM 2064 / JCM 8514 / BCRC 14874 / CCUG 350202 / NBRC 14942 / NCIMB 11054 / UW101) (Cytophaga johnsonae).